A 370-amino-acid polypeptide reads, in one-letter code: Aminomethyltransferase (370 aa).

It belongs to the GcvT family. In terms of assembly, the glycine cleavage system is composed of four proteins: P, T, L and H.

It catalyses the reaction N(6)-[(R)-S(8)-aminomethyldihydrolipoyl]-L-lysyl-[protein] + (6S)-5,6,7,8-tetrahydrofolate = N(6)-[(R)-dihydrolipoyl]-L-lysyl-[protein] + (6R)-5,10-methylene-5,6,7,8-tetrahydrofolate + NH4(+). In terms of biological role, the glycine cleavage system catalyzes the degradation of glycine. The sequence is that of Aminomethyltransferase from Clostridium botulinum (strain Langeland / NCTC 10281 / Type F).